Consider the following 202-residue polypeptide: MRNFVIIAHKALTTGDFSLNDLPGSAGRMDILCRCINSCLFLSHDLRRDVQVHLLLLGEPEPGKIIRFDSEHVRYLNPDERSAGSLIKKALQKTAGEYEVRSTPGVFIRSGNLGTLLNEFKDAGRRLIYLHEDGEDIRELSDLTNNAVFILGDHMGVTEEEEQLIKEHEAKTISLGPIPLHADHCIILINNEIDRNLSGKSQ.

The S-adenosyl-L-methionine site is built by Leu130, Gly152, and Cys185.

This sequence belongs to the methyltransferase superfamily. TrmY family. Homodimer.

It localises to the cytoplasm. The enzyme catalyses pseudouridine(54) in tRNA + S-adenosyl-L-methionine = N(1)-methylpseudouridine(54) in tRNA + S-adenosyl-L-homocysteine + H(+). Specifically catalyzes the N1-methylation of pseudouridine at position 54 (Psi54) in tRNAs. The sequence is that of tRNA (pseudouridine(54)-N(1))-methyltransferase from Methanococcoides burtonii (strain DSM 6242 / NBRC 107633 / OCM 468 / ACE-M).